The primary structure comprises 68 residues: Conotoxin Pu5.5 (68 aa).

Positions 1-22 (MRCVPVFIILLVLIASAPSVDA) are cleaved as a signal peptide. Residues 23-49 (RPQTKDDALASFRDSIKRHLQTLLDAR) constitute a propeptide that is removed on maturation.

The protein belongs to the conotoxin T superfamily. In terms of processing, contains 2 disulfide bonds that can be either 'C1-C3, C2-C4' or 'C1-C4, C2-C3', since these disulfide connectivities have been observed for conotoxins with cysteine framework V (for examples, see AC P0DQQ7 and AC P81755). In terms of tissue distribution, expressed by the venom duct.

The protein localises to the secreted. The protein is Conotoxin Pu5.5 of Conus pulicarius (Flea-bitten cone).